The primary structure comprises 327 residues: Glycerol-3-phosphate dehydrogenase [NAD(P)+] (327 aa).

Positions 13, 34, and 107 each coordinate NADPH. Sn-glycerol 3-phosphate contacts are provided by Lys-107 and Gly-135. Ala-139 contacts NADPH. Sn-glycerol 3-phosphate contacts are provided by Lys-190, Asp-243, Ser-253, Arg-254, and Asn-255. Lys-190 serves as the catalytic Proton acceptor. Arg-254 provides a ligand contact to NADPH. Val-276 and Glu-277 together coordinate NADPH.

Belongs to the NAD-dependent glycerol-3-phosphate dehydrogenase family.

The protein resides in the cytoplasm. The catalysed reaction is sn-glycerol 3-phosphate + NAD(+) = dihydroxyacetone phosphate + NADH + H(+). It catalyses the reaction sn-glycerol 3-phosphate + NADP(+) = dihydroxyacetone phosphate + NADPH + H(+). It functions in the pathway membrane lipid metabolism; glycerophospholipid metabolism. Its function is as follows. Catalyzes the reduction of the glycolytic intermediate dihydroxyacetone phosphate (DHAP) to sn-glycerol 3-phosphate (G3P), the key precursor for phospholipid synthesis. This is Glycerol-3-phosphate dehydrogenase [NAD(P)+] from Rhizobium johnstonii (strain DSM 114642 / LMG 32736 / 3841) (Rhizobium leguminosarum bv. viciae).